The primary structure comprises 186 residues: Imidazoleglycerol-phosphate dehydratase (186 aa).

Belongs to the imidazoleglycerol-phosphate dehydratase family.

It localises to the cytoplasm. The catalysed reaction is D-erythro-1-(imidazol-4-yl)glycerol 3-phosphate = 3-(imidazol-4-yl)-2-oxopropyl phosphate + H2O. It functions in the pathway amino-acid biosynthesis; L-histidine biosynthesis; L-histidine from 5-phospho-alpha-D-ribose 1-diphosphate: step 6/9. This chain is Imidazoleglycerol-phosphate dehydratase, found in Dictyoglomus thermophilum (strain ATCC 35947 / DSM 3960 / H-6-12).